Consider the following 399-residue polypeptide: 1-deoxy-D-xylulose 5-phosphate reductoisomerase (399 aa).

5 residues coordinate NADPH: T13, G14, S15, I16, and N127. Position 128 (K128) interacts with 1-deoxy-D-xylulose 5-phosphate. E129 serves as a coordination point for NADPH. D153 contacts Mn(2+). S154, E155, S187, and H210 together coordinate 1-deoxy-D-xylulose 5-phosphate. Mn(2+) is bound at residue E155. Position 216 (G216) interacts with NADPH. 1-deoxy-D-xylulose 5-phosphate-binding residues include S223, N228, K229, and E232. E232 serves as a coordination point for Mn(2+).

The protein belongs to the DXR family. Mg(2+) is required as a cofactor. Mn(2+) serves as cofactor.

It carries out the reaction 2-C-methyl-D-erythritol 4-phosphate + NADP(+) = 1-deoxy-D-xylulose 5-phosphate + NADPH + H(+). The protein operates within isoprenoid biosynthesis; isopentenyl diphosphate biosynthesis via DXP pathway; isopentenyl diphosphate from 1-deoxy-D-xylulose 5-phosphate: step 1/6. Its function is as follows. Catalyzes the NADPH-dependent rearrangement and reduction of 1-deoxy-D-xylulose-5-phosphate (DXP) to 2-C-methyl-D-erythritol 4-phosphate (MEP). This Bordetella pertussis (strain Tohama I / ATCC BAA-589 / NCTC 13251) protein is 1-deoxy-D-xylulose 5-phosphate reductoisomerase.